Here is a 310-residue protein sequence, read N- to C-terminus: Malate dehydrogenase (310 aa).

NAD(+) contacts are provided by residues 7–13 and Asp34; that span reads GAAGGIG. Positions 81 and 87 each coordinate substrate. Residues Asn94 and 117 to 119 each bind NAD(+); that span reads ITN. Substrate-binding residues include Asn119 and Arg153. The Proton acceptor role is filled by His177. Met227 is an NAD(+) binding site.

This sequence belongs to the LDH/MDH superfamily. MDH type 1 family. In terms of assembly, homodimer.

It carries out the reaction (S)-malate + NAD(+) = oxaloacetate + NADH + H(+). In terms of biological role, catalyzes the reversible oxidation of malate to oxaloacetate. The chain is Malate dehydrogenase from Idiomarina loihiensis (strain ATCC BAA-735 / DSM 15497 / L2-TR).